Consider the following 514-residue polypeptide: ATP synthase subunit alpha (514 aa).

170-177 serves as a coordination point for ATP; sequence GDRQIGKT.

The protein belongs to the ATPase alpha/beta chains family. In terms of assembly, F-type ATPases have 2 components, CF(1) - the catalytic core - and CF(0) - the membrane proton channel. CF(1) has five subunits: alpha(3), beta(3), gamma(1), delta(1), epsilon(1). CF(0) has three main subunits: a(1), b(2) and c(9-12). The alpha and beta chains form an alternating ring which encloses part of the gamma chain. CF(1) is attached to CF(0) by a central stalk formed by the gamma and epsilon chains, while a peripheral stalk is formed by the delta and b chains.

The protein resides in the cell inner membrane. The enzyme catalyses ATP + H2O + 4 H(+)(in) = ADP + phosphate + 5 H(+)(out). Its function is as follows. Produces ATP from ADP in the presence of a proton gradient across the membrane. The alpha chain is a regulatory subunit. This Pseudomonas fluorescens (strain Pf0-1) protein is ATP synthase subunit alpha.